We begin with the raw amino-acid sequence, 447 residues long: MENLTLVSCSASSPKLLIGCNFTSSLKNPTGFSRRTPNIVLRCSKISASAQSQSPSSRPENTGEIVVVKQRSKAFASIFSSSRDQQTTSVASPSVPVPPPSSSTIGSPLFWIGVGVGLSALFSYVTSNLKKYAMQTAMKTMMNQMNTQNSQFNNSGFPSGSPFPFPFPPQTSPASSPFQSQSQSSGATVDVTATKVETPPSTKPKPTPAKDIEVDKPSVVLEASKEKKEEKNYAFEDISPEETTKESPFSNYAEVSETNSPKETRLFEDVLQNGAGPANGATASEVFQSLGGGKGGPGLSVEALEKMMEDPTVQKMVYPYLPEEMRNPETFKWMLKNPQYRQQLQDMLNNMSGSGEWDKRMTDTLKNFDLNSPEVKQQFNQIGLTPEEVISKIMENPDVAMAFQNPRVQAALMECSENPMNIMKYQNDKEVMDVFNKISQLFPGMTG.

The N-terminal 43 residues, 1-43, are a transit peptide targeting the chloroplast; it reads MENLTLVSCSASSPKLLIGCNFTSSLKNPTGFSRRTPNIVLRC. The N-terminal 33 residues, 44-76, are a transit peptide targeting the chloroplast; inner membrane; that stretch reads SKISASAQSQSPSSRPENTGEIVVVKQRSKAFA. Over 77–104 the chain is Chloroplast intermembrane; it reads SIFSSSRDQQTTSVASPSVPVPPPSSST. Residues 105–125 form a helical membrane-spanning segment; the sequence is IGSPLFWIGVGVGLSALFSYV. Residues 126–447 lie on the Stromal side of the membrane; it reads TSNLKKYAMQ…ISQLFPGMTG (322 aa). Low complexity predominate over residues 148–160; that stretch reads QNSQFNNSGFPSG. Disordered regions lie at residues 148–214 and 231–261; these read QNSQ…DIEV and KNYA…TNSP. Residues 161–171 show a composition bias toward pro residues; the sequence is SPFPFPFPPQT. The span at 172-186 shows a compositional bias: low complexity; the sequence is SPASSPFQSQSQSSG. STI1 domains follow at residues 310–344 and 386–425; these read DPTV…RQQL and PEEV…IMKY.

As to quaternary structure, part of the Tic complex. Interacts with HSP93, TIC110 and LTD. In terms of tissue distribution, expressed in seedlings, flowers, leaves, stems and roots.

It is found in the plastid. The protein localises to the chloroplast inner membrane. Involved in protein precursor import into chloroplasts. Part of the motor complex consisting of a co-chaperone (TIC40) and a chaperone (HSP93) associated with the import channel (TIC110). Causes the release of bound transit peptides from TIC110 and stimulates ATP hydrolysis by HSP93. Involved in reinsertion of proteins from the chloroplast stroma into the inner membrane. This Arabidopsis thaliana (Mouse-ear cress) protein is Protein TIC 40, chloroplastic (TIC40).